The primary structure comprises 306 residues: Pantothenate kinase (306 aa).

ATP is bound at residue 91 to 98 (GSVAVGKS).

Belongs to the prokaryotic pantothenate kinase family.

It is found in the cytoplasm. The catalysed reaction is (R)-pantothenate + ATP = (R)-4'-phosphopantothenate + ADP + H(+). Its pathway is cofactor biosynthesis; coenzyme A biosynthesis; CoA from (R)-pantothenate: step 1/5. This Streptococcus equi subsp. zooepidemicus (strain MGCS10565) protein is Pantothenate kinase.